The sequence spans 161 residues: Nucleotide-binding protein Bxeno_A3642 (161 aa).

This sequence belongs to the YajQ family.

Nucleotide-binding protein. The chain is Nucleotide-binding protein Bxeno_A3642 from Paraburkholderia xenovorans (strain LB400).